Reading from the N-terminus, the 395-residue chain is MRN complex-interacting protein (395 aa).

Positions 90–100 (DPKSEQEEAHV) are enriched in basic and acidic residues. 2 disordered regions span residues 90-155 (DPKS…GGNC) and 180-275 (KRSS…FGES). Residues 104-113 (SKYTDQTTEG) show a composition bias toward polar residues. The span at 117–127 (EKDDEDEDENV) shows a compositional bias: acidic residues. The short motif at 142–145 (RKKM) is the Nuclear localization signal (NLS) element. Over residues 183–195 (SSSWNKGSVSKYS) the composition is skewed to low complexity. Composition is skewed to polar residues over residues 224-244 (ACSS…QIKS) and 260-270 (QSESPSVSSHQ).

Belongs to the MRNIP family.

Its subcellular location is the nucleus. The protein resides in the nucleoplasm. Functionally, plays a role in the cellular response to DNA damage and the maintenance of genome stability through its association with the MRN damage-sensing complex. Promotes chromatin loading and activity of the MRN complex to facilitate subsequent ATM-mediated DNA damage response signaling and DNA repair. This chain is MRN complex-interacting protein, found in Danio rerio (Zebrafish).